The primary structure comprises 146 residues: 3-dehydroquinate dehydratase (146 aa).

Catalysis depends on Tyr-23, which acts as the Proton acceptor. 3 residues coordinate substrate: Asn-79, His-85, and Asp-92. His-105 functions as the Proton donor in the catalytic mechanism. Residues 106–107 (IS) and Arg-116 each bind substrate.

It belongs to the type-II 3-dehydroquinase family. Homododecamer.

It catalyses the reaction 3-dehydroquinate = 3-dehydroshikimate + H2O. It functions in the pathway metabolic intermediate biosynthesis; chorismate biosynthesis; chorismate from D-erythrose 4-phosphate and phosphoenolpyruvate: step 3/7. Its function is as follows. Catalyzes a trans-dehydration via an enolate intermediate. This is 3-dehydroquinate dehydratase from Variovorax paradoxus (strain S110).